A 184-amino-acid chain; its full sequence is Cysteine proteinase inhibitor 3 (184 aa).

Positions 1–35 (MLRRRGFCCCSGAPAAAAAALLLLAVAAAAPRAAG) are cleaved as a signal peptide. Positions 48 to 134 (GMLAAIRREQ…KAVVEFRHVG (87 aa)) constitute a Cystatin domain. Residues 90–94 (QVVTG) carry the Secondary area of contact motif. The tract at residues 138–165 (SQSATAADDNAGQDTADPTVASRNDLHN) is disordered.

It belongs to the cystatin family. Phytocystatin subfamily.

It is found in the secreted. Functionally, specific inhibitor of cysteine proteinases. Probably involved in the regulation of endogenous processes and in defense against pests and pathogens. In Oryza sativa subsp. japonica (Rice), this protein is Cysteine proteinase inhibitor 3.